The chain runs to 20 residues: Ribulose bisphosphate carboxylase small subunit (20 aa).

The protein belongs to the RuBisCO small chain family. Heterohexadecamer of 8 large and 8 small subunits.

The protein resides in the plastid. It localises to the chloroplast. Its function is as follows. RuBisCO catalyzes two reactions: the carboxylation of D-ribulose 1,5-bisphosphate, the primary event in carbon dioxide fixation, as well as the oxidative fragmentation of the pentose substrate in the photorespiration process. Both reactions occur simultaneously and in competition at the same active site. Although the small subunit is not catalytic it is essential for maximal activity. This Chattonella marina var. antiqua (Red tide flagellate) protein is Ribulose bisphosphate carboxylase small subunit.